The sequence spans 528 residues: Na(+)/H(+) antiporter NhaB (528 aa).

11 consecutive transmembrane segments (helical) span residues 10–30 (IGNF…SFLI), 63–83 (YPLQ…MTSA), 96–116 (VLLL…LLLF), 131–165 (VSLM…FYAI), 204–224 (LLMH…VGEP), 240–260 (FVIR…LTCL), 305–325 (VLVG…VGLV), 359–379 (LAVF…APVI), 391–411 (LVIF…VFVG), 449–469 (ATPN…APLI), and 476–496 (MVWM…LAIE).

The protein belongs to the NhaB Na(+)/H(+) (TC 2.A.34) antiporter family.

It is found in the cell inner membrane. The catalysed reaction is 2 Na(+)(in) + 3 H(+)(out) = 2 Na(+)(out) + 3 H(+)(in). Its function is as follows. Na(+)/H(+) antiporter that extrudes sodium in exchange for external protons. The polypeptide is Na(+)/H(+) antiporter NhaB (Shewanella putrefaciens (strain CN-32 / ATCC BAA-453)).